A 257-amino-acid polypeptide reads, in one-letter code: tRNA uridine(34) hydroxylase (257 aa).

The Rhodanese domain maps to 128–222 (NGRRLVMLDA…YFEQVGGEGY (95 aa)). The active-site Cysteine persulfide intermediate is C182.

It belongs to the TrhO family.

The catalysed reaction is uridine(34) in tRNA + AH2 + O2 = 5-hydroxyuridine(34) in tRNA + A + H2O. In terms of biological role, catalyzes oxygen-dependent 5-hydroxyuridine (ho5U) modification at position 34 in tRNAs. This chain is tRNA uridine(34) hydroxylase, found in Xylella fastidiosa (strain M23).